Here is a 720-residue protein sequence, read N- to C-terminus: Putative fatty acid oxidation complex trifunctional enzyme (720 aa).

The 3-hydroxyacyl-CoA dehydrogenase stretch occupies residues 1–384 (MQNEIKKVCV…SWHYGPFELL (384 aa)). The segment at 453 to 720 (FVITTKMNSL…TIEKLQAIVG (268 aa)) is enoyl-CoA hydratase/isomerase.

The protein in the N-terminal section; belongs to the 3-hydroxyacyl-CoA dehydrogenase family. This sequence in the C-terminal section; belongs to the enoyl-CoA hydratase/isomerase family.

The catalysed reaction is a (3S)-3-hydroxyacyl-CoA + NAD(+) = a 3-oxoacyl-CoA + NADH + H(+). It catalyses the reaction a (3S)-3-hydroxyacyl-CoA = a (2E)-enoyl-CoA + H2O. The enzyme catalyses a 4-saturated-(3S)-3-hydroxyacyl-CoA = a (3E)-enoyl-CoA + H2O. It carries out the reaction a (3Z)-enoyl-CoA = a 4-saturated (2E)-enoyl-CoA. The catalysed reaction is a (3E)-enoyl-CoA = a 4-saturated (2E)-enoyl-CoA. The chain is Putative fatty acid oxidation complex trifunctional enzyme from Rickettsia prowazekii (strain Madrid E).